The chain runs to 462 residues: ATP synthase subunit beta (462 aa).

151 to 158 lines the ATP pocket; it reads GGAGVGKT.

The protein belongs to the ATPase alpha/beta chains family. In terms of assembly, F-type ATPases have 2 components, CF(1) - the catalytic core - and CF(0) - the membrane proton channel. CF(1) has five subunits: alpha(3), beta(3), gamma(1), delta(1), epsilon(1). CF(0) has four main subunits: a(1), b(1), b'(1) and c(9-12).

It is found in the cell inner membrane. The enzyme catalyses ATP + H2O + 4 H(+)(in) = ADP + phosphate + 5 H(+)(out). In terms of biological role, produces ATP from ADP in the presence of a proton gradient across the membrane. The catalytic sites are hosted primarily by the beta subunits. The sequence is that of ATP synthase subunit beta from Pelodictyon phaeoclathratiforme (strain DSM 5477 / BU-1).